The following is a 274-amino-acid chain: Large ribosomal subunit protein uL2 (274 aa).

The interval 221–274 is disordered; that stretch reads RGTAMNPVDHPHGGGEGRNFGKHPVTPWGVQTKGKKTRSNKRTDKFIVRRRSKK.

The protein belongs to the universal ribosomal protein uL2 family. Part of the 50S ribosomal subunit. Forms a bridge to the 30S subunit in the 70S ribosome.

Functionally, one of the primary rRNA binding proteins. Required for association of the 30S and 50S subunits to form the 70S ribosome, for tRNA binding and peptide bond formation. It has been suggested to have peptidyltransferase activity; this is somewhat controversial. Makes several contacts with the 16S rRNA in the 70S ribosome. In Yersinia enterocolitica, this protein is Large ribosomal subunit protein uL2.